A 228-amino-acid chain; its full sequence is Endo-1,4-beta-xylanase B (228 aa).

Residues 1–19 (MVSFTYLLAAVSAVTGAVA) form the signal peptide. A GH11 domain is found at 37-227 (KRTSPTTGVN…SSGQATMTVS (191 aa)). Glutamate 122 acts as the Nucleophile in catalysis. The active-site Proton donor is glutamate 214.

The protein belongs to the glycosyl hydrolase 11 (cellulase G) family.

It localises to the secreted. It catalyses the reaction Endohydrolysis of (1-&gt;4)-beta-D-xylosidic linkages in xylans.. The protein operates within glycan degradation; xylan degradation. Its activity is regulated as follows. Inhibited by the proteinaceous endoxylanase inhibitor I from T.aestivum (TAXI-I). Functionally, endo-1,4-beta-xylanase involved in the hydrolysis of xylan, a major structural heterogeneous polysaccharide found in plant biomass representing the second most abundant polysaccharide in the biosphere, after cellulose. Plays an important role in causing fusarium head blight (FHB) on cereal crops. Induces cell death and hydrogen peroxide accumulation in infected wheat leaves. In Gibberella zeae (strain ATCC MYA-4620 / CBS 123657 / FGSC 9075 / NRRL 31084 / PH-1) (Wheat head blight fungus), this protein is Endo-1,4-beta-xylanase B (XYLB).